The chain runs to 697 residues: Elongation factor G (697 aa).

The tr-type G domain occupies 8 to 290; the sequence is ERYRNIGIMA…AVLSYMPSPV (283 aa). Residues 17-24, 88-92, and 142-145 contribute to the GTP site; these read AHIDAGKT, DTPGH, and NKMD.

The protein belongs to the TRAFAC class translation factor GTPase superfamily. Classic translation factor GTPase family. EF-G/EF-2 subfamily.

It localises to the cytoplasm. In terms of biological role, catalyzes the GTP-dependent ribosomal translocation step during translation elongation. During this step, the ribosome changes from the pre-translocational (PRE) to the post-translocational (POST) state as the newly formed A-site-bound peptidyl-tRNA and P-site-bound deacylated tRNA move to the P and E sites, respectively. Catalyzes the coordinated movement of the two tRNA molecules, the mRNA and conformational changes in the ribosome. This is Elongation factor G from Nitrosococcus oceani (strain ATCC 19707 / BCRC 17464 / JCM 30415 / NCIMB 11848 / C-107).